A 649-amino-acid polypeptide reads, in one-letter code: Lysophospholipase (649 aa).

Positions 1 to 21 (MNLKEWLLFSDAVFFAQGTLA) are cleaved as a signal peptide. 17 N-linked (GlcNAc...) asparagine glycosylation sites follow: asparagine 32, asparagine 51, asparagine 77, asparagine 90, asparagine 121, asparagine 158, asparagine 168, asparagine 213, asparagine 275, asparagine 343, asparagine 386, asparagine 457, asparagine 487, asparagine 511, asparagine 539, asparagine 563, and asparagine 580. In terms of domain architecture, PLA2c spans 34–584 (SCDEDINLIR…TNYCWNGTID (551 aa)).

The protein belongs to the lysophospholipase family.

The protein resides in the secreted. It carries out the reaction a 1-acyl-sn-glycero-3-phosphocholine + H2O = sn-glycerol 3-phosphocholine + a fatty acid + H(+). Catalyzes the release of fatty acids from lysophospholipids. This is Lysophospholipase from Torulaspora delbrueckii (Yeast).